A 404-amino-acid polypeptide reads, in one-letter code: Phosphoribulokinase, chloroplastic (404 aa).

The N-terminal 53 residues, 1 to 53 (MAFCSPHTTTSLRSPCTTIPNSGFRQNQVIFFTTRSSRRSNTRHGARTFQVSC), are a transit peptide targeting the chloroplast. Cys69 and Cys108 are joined by a disulfide.

It belongs to the phosphoribulokinase family.

It is found in the plastid. Its subcellular location is the chloroplast. It catalyses the reaction D-ribulose 5-phosphate + ATP = D-ribulose 1,5-bisphosphate + ADP + H(+). It functions in the pathway carbohydrate biosynthesis; Calvin cycle. With respect to regulation, light regulated via thioredoxin by reversible oxidation/reduction of sulfhydryl/disulfide groups. The protein is Phosphoribulokinase, chloroplastic of Triticum aestivum (Wheat).